A 327-amino-acid polypeptide reads, in one-letter code: Methionyl-tRNA formyltransferase (327 aa).

118-121 (SLLP) contributes to the (6S)-5,6,7,8-tetrahydrofolate binding site.

The protein belongs to the Fmt family.

It carries out the reaction L-methionyl-tRNA(fMet) + (6R)-10-formyltetrahydrofolate = N-formyl-L-methionyl-tRNA(fMet) + (6S)-5,6,7,8-tetrahydrofolate + H(+). In terms of biological role, attaches a formyl group to the free amino group of methionyl-tRNA(fMet). The formyl group appears to play a dual role in the initiator identity of N-formylmethionyl-tRNA by promoting its recognition by IF2 and preventing the misappropriation of this tRNA by the elongation apparatus. This Corynebacterium jeikeium (strain K411) protein is Methionyl-tRNA formyltransferase.